The following is a 1116-amino-acid chain: cGMP-specific 3',5'-cyclic phosphodiesterase (1116 aa).

Disordered stretches follow at residues 1–36 (MTDV…NGAA) and 82–136 (KSEC…ATQQ). Residues 15–28 (VSSTSSEVAVETTS) show a composition bias toward low complexity. Over residues 86–136 (HSQSNNNQHVETAPSKQSSDSEASAPTTVSIPSANAKINSSSSGKTTATQQ) the composition is skewed to polar residues. GAF domains are found at residues 241–393 (DIDV…GIGI) and 425–611 (NLEC…GLGI). The 324-residue stretch at 641–964 (SQDQTEKLAQ…RNWQDLAEKV (324 aa)) folds into the PDEase domain. Residue H717 is the Proton donor of the active site. A divalent metal cation contacts are provided by H721, H757, D758, and D868. 2 disordered regions span residues 1005–1031 (QHGG…LSIK) and 1067–1116 (HVSE…CALL). Composition is skewed to basic and acidic residues over residues 1014 to 1023 (EDTHTPEHQR) and 1067 to 1076 (HVSEDMDDKS). Residues 1085-1103 (SGSVGRMSASSSTSSAGTV) are compositionally biased toward low complexity. Over residues 1106–1116 (SKKRSKLCALL) the composition is skewed to basic residues. C1113 carries the post-translational modification Cysteine methyl ester. C1113 carries the S-farnesyl cysteine lipid modification. A propeptide spans 1114-1116 (ALL) (removed in mature form).

This sequence belongs to the cyclic nucleotide phosphodiesterase family. Interacts with PrBP. It depends on a divalent metal cation as a cofactor.

The protein resides in the cell membrane. It catalyses the reaction 3',5'-cyclic GMP + H2O = GMP + H(+). Functionally, has a role regulating cGMP transport in Malpighian tubule principal cells. This Drosophila mojavensis (Fruit fly) protein is cGMP-specific 3',5'-cyclic phosphodiesterase.